Reading from the N-terminus, the 803-residue chain is Regulatory protein SWI6 (803 aa).

Positions 108-117 (EPETDQDEED) are enriched in acidic residues. The interval 108 to 150 (EPETDQDEEDPSHSKLPENKTKSENSKDNISSKRINNLQDMSL) is disordered. Positions 118–138 (PSHSKLPENKTKSENSKDNIS) are enriched in basic and acidic residues. The span at 139 to 149 (SKRINNLQDMS) shows a compositional bias: polar residues. Residue serine 149 is modified to Phosphoserine. The residue at position 160 (serine 160) is a Phosphoserine; by CDC28. Disordered stretches follow at residues 169–212 (TSVI…RTAG) and 266–288 (PTSL…QQQQ). A Phosphoserine modification is found at serine 176. Phosphothreonine occurs at positions 179 and 182. The segment covering 270–288 (NNDSSNRNSEGGSSNQQQQ) has biased composition (low complexity). ANK repeat units lie at residues 318–346 (GNTP…NRLY), 347–383 (GDNM…CLIL), 384–469 (EDSM…QDSN), 470–498 (GDTC…DPFI), and 499–514 (ANKS…AGTS). The segment at 512-540 (GTSKLQNTNGGDENSKMVSKGDYDGQKNG) is disordered. Polar residues predominate over residues 514–523 (SKLQNTNGGD). Over residues 524-538 (ENSKMVSKGDYDGQK) the composition is skewed to basic and acidic residues. The residue at position 547 (serine 547) is a Phosphoserine.

As to quaternary structure, component of the transcription complex MCB-binding factor (MBF) composed of SWI6 and MBP1. Component of the transcription complex SCB-binding factor (SBF) composed of SWI6 and SWI4. Interacts with MSA1 and STB1. Post-translationally, phosphorylated by CDC28 and dephosphorylated by CDC14.

It is found in the nucleus. The protein localises to the cytoplasm. In terms of biological role, part of a complex involved in cell-cycle-dependent transcription. SWI4 and SWI6 are required for formation of the cell-cycle box factor-DNA complex. The repeated element in the upstream region of HO (5'-CACGAAAA-3') is called the cell cycle box (CCB). The polypeptide is Regulatory protein SWI6 (SWI6) (Saccharomyces cerevisiae (strain ATCC 204508 / S288c) (Baker's yeast)).